Consider the following 586-residue polypeptide: Inner membrane protein YejM (586 aa).

The Cytoplasmic portion of the chain corresponds to 1–20 (MVTHRQRYREKVSQMVSWGH). A helical transmembrane segment spans residues 21–43 (WFALFNILLATLLGSRYLFVADW). Over 44–57 (PTTLAGRIYSYLSI) the chain is Periplasmic. Residues 58–80 (VGHFSFLVFATYLLILFPLTFIV) traverse the membrane as a helical segment. The Cytoplasmic segment spans residues 81–84 (MSQR). The chain crosses the membrane as a helical span at residues 85–103 (LMRFLSAILATAGMTLLLI). Topologically, residues 104 to 134 (DSEVFTRFHLHLNPIVWELVINPDQNEMARD) are periplasmic. A helical transmembrane segment spans residues 135-157 (WQLMFISVPVILLIEMLFATWSW). Residues 158–168 (QKLRSLTRRRH) lie on the Cytoplasmic side of the membrane. The helical transmembrane segment at 169 to 191 (FARPLAAFFFVSFIASHLIYIWA) threads the bilayer. The Periplasmic segment spans residues 192-586 (DANFYRPITM…LTEEKRFIAN (395 aa)).

This sequence to H.influenzae HI_0842.

Its subcellular location is the cell inner membrane. This is Inner membrane protein YejM (yejM) from Salmonella typhi.